Here is a 554-residue protein sequence, read N- to C-terminus: CTP synthase (554 aa).

Residues 1-270 (MTKFVFVTGG…DGLICDKLRL (270 aa)) are amidoligase domain. Serine 13 contributes to the CTP binding site. Serine 13 is a binding site for UTP. ATP contacts are provided by residues 14–19 (SLGKGI) and aspartate 71. Mg(2+)-binding residues include aspartate 71 and glutamate 144. CTP contacts are provided by residues 151-153 (DIE), 191-196 (KTKPTQ), and lysine 227. UTP contacts are provided by residues 191 to 196 (KTKPTQ) and lysine 227. In terms of domain architecture, Glutamine amidotransferase type-1 spans 295 to 548 (TVAMVGKYVD…IAAAKARHQA (254 aa)). L-glutamine is bound at residue glycine 357. The active-site Nucleophile; for glutamine hydrolysis is the cysteine 384. Residues 385–388 (LGMQ), glutamate 408, and arginine 474 each bind L-glutamine. Active-site residues include histidine 521 and glutamate 523.

The protein belongs to the CTP synthase family. In terms of assembly, homotetramer.

The catalysed reaction is UTP + L-glutamine + ATP + H2O = CTP + L-glutamate + ADP + phosphate + 2 H(+). It carries out the reaction L-glutamine + H2O = L-glutamate + NH4(+). The enzyme catalyses UTP + NH4(+) + ATP = CTP + ADP + phosphate + 2 H(+). The protein operates within pyrimidine metabolism; CTP biosynthesis via de novo pathway; CTP from UDP: step 2/2. Its activity is regulated as follows. Allosterically activated by GTP, when glutamine is the substrate; GTP has no effect on the reaction when ammonia is the substrate. The allosteric effector GTP functions by stabilizing the protein conformation that binds the tetrahedral intermediate(s) formed during glutamine hydrolysis. Inhibited by the product CTP, via allosteric rather than competitive inhibition. Catalyzes the ATP-dependent amination of UTP to CTP with either L-glutamine or ammonia as the source of nitrogen. Regulates intracellular CTP levels through interactions with the four ribonucleotide triphosphates. This Verminephrobacter eiseniae (strain EF01-2) protein is CTP synthase.